Here is a 239-residue protein sequence, read N- to C-terminus: 1-(5-phosphoribosyl)-5-[(5-phosphoribosylamino)methylideneamino] imidazole-4-carboxamide isomerase (239 aa).

The active-site Proton acceptor is Asp-9. Residue Asp-131 is the Proton donor of the active site.

Belongs to the HisA/HisF family.

The protein localises to the cytoplasm. The catalysed reaction is 1-(5-phospho-beta-D-ribosyl)-5-[(5-phospho-beta-D-ribosylamino)methylideneamino]imidazole-4-carboxamide = 5-[(5-phospho-1-deoxy-D-ribulos-1-ylimino)methylamino]-1-(5-phospho-beta-D-ribosyl)imidazole-4-carboxamide. It functions in the pathway amino-acid biosynthesis; L-histidine biosynthesis; L-histidine from 5-phospho-alpha-D-ribose 1-diphosphate: step 4/9. The protein is 1-(5-phosphoribosyl)-5-[(5-phosphoribosylamino)methylideneamino] imidazole-4-carboxamide isomerase of Phocaeicola vulgatus (strain ATCC 8482 / DSM 1447 / JCM 5826 / CCUG 4940 / NBRC 14291 / NCTC 11154) (Bacteroides vulgatus).